The following is a 341-amino-acid chain: tRNA N6-adenosine threonylcarbamoyltransferase (341 aa).

The Fe cation site is built by histidine 111 and histidine 115. Substrate-binding positions include 134–138 (LVSGG), aspartate 167, glycine 180, and asparagine 276. Aspartate 304 is a binding site for Fe cation.

Belongs to the KAE1 / TsaD family. Fe(2+) is required as a cofactor.

It is found in the cytoplasm. The catalysed reaction is L-threonylcarbamoyladenylate + adenosine(37) in tRNA = N(6)-L-threonylcarbamoyladenosine(37) in tRNA + AMP + H(+). Functionally, required for the formation of a threonylcarbamoyl group on adenosine at position 37 (t(6)A37) in tRNAs that read codons beginning with adenine. Is involved in the transfer of the threonylcarbamoyl moiety of threonylcarbamoyl-AMP (TC-AMP) to the N6 group of A37, together with TsaE and TsaB. TsaD likely plays a direct catalytic role in this reaction. The polypeptide is tRNA N6-adenosine threonylcarbamoyltransferase (Pseudomonas aeruginosa (strain LESB58)).